Consider the following 372-residue polypeptide: Heterogeneous nuclear rnp K-like protein 2 (372 aa).

Residues 1–23 (MSDINDPNSISLPVGSSCTSRGA) show a composition bias toward polar residues. Residues 1-49 (MSDINDPNSISLPVGSSCTSRGASTETFTTSRSTTLFSSQQESKDEGNV) form a disordered region. Positions 24-39 (STETFTTSRSTTLFSS) are enriched in low complexity. KH domains lie at 59–123 (TINH…LGQI), 167–232 (IGTS…LLQI), and 283–354 (EFKA…ESML).

The protein belongs to the HEK2 family. Binds RNA.

Its subcellular location is the cytoplasm. The protein resides in the P-body. It localises to the nucleus. The protein localises to the chromosome. It is found in the telomere. Its function is as follows. RNA-binding protein involved in the correct localization of transcripts in the cell. RNA localization is a widespread mechanism for achieving localized protein synthesis. Involved in structural and functional organization of telomeric chromatin and regulates silencing at the HMR locus. This chain is Heterogeneous nuclear rnp K-like protein 2 (HEK2), found in Zygosaccharomyces rouxii (strain ATCC 2623 / CBS 732 / NBRC 1130 / NCYC 568 / NRRL Y-229).